The primary structure comprises 692 residues: Formate hydrogenlyase transcriptional activator FhlA (692 aa).

Residues 202–344 (DMDELVSEVA…QIAERVAIAV (143 aa)) enclose the GAF domain. Residues 381 to 610 (IIGRSEAMYS…LENVIERAVL (230 aa)) form the Sigma-54 factor interaction domain. ATP contacts are provided by residues 409–416 (GETGTGKE) and 472–481 (ADKSSLFLDE). The segment at residues 663 to 682 (PKGAAQRLGLKRTTLLSRMK) is a DNA-binding region (H-T-H motif).

Its function is as follows. Required for induction of expression of the formate dehydrogenase H and hydrogenase-3 structural genes. Also activates expression of hyf operon (encodes the silent hydrogenase-4 gene cluster). The polypeptide is Formate hydrogenlyase transcriptional activator FhlA (fhlA) (Escherichia coli (strain K12)).